The following is a 337-amino-acid chain: Phenylalanine--tRNA ligase alpha subunit (337 aa).

Glutamate 252 contributes to the Mg(2+) binding site.

It belongs to the class-II aminoacyl-tRNA synthetase family. Phe-tRNA synthetase alpha subunit type 1 subfamily. Tetramer of two alpha and two beta subunits. Requires Mg(2+) as cofactor.

Its subcellular location is the cytoplasm. The enzyme catalyses tRNA(Phe) + L-phenylalanine + ATP = L-phenylalanyl-tRNA(Phe) + AMP + diphosphate + H(+). The protein is Phenylalanine--tRNA ligase alpha subunit of Francisella tularensis subsp. tularensis (strain SCHU S4 / Schu 4).